The following is a 616-amino-acid chain: MGYLVVIGVIACVAYGILQVVSTVLPRLLLVPSQNWQDKIKKEIEQPMVRYLKVGNKRSSYRRRLVLASKQPSFYTNFVNNKIKVASVDSQNDEGEFLAEMKKRDVRDPQRKIIYGFFHPYANNGGGGERVLWQAVQATLATSDRNIVAIYTTNYESDPTSILDKVEAKFQISRLDEDRIVFVYLRKYARLIDGDYWKRFTLIGQLFGSMVLSWEAMFELSPDVWIDTIGLPGSYLLVSLVLKIPIMSYVHYPIIQPEMFNKLKFQGLSQIRVPKLSEIKTDVFSIGKLIYWSGVFYFYKYLGSLVNITLANGSWTFNHISNIWTINKDEAGYEMDILYPPCGTETLTKNVETLGSRENKLLFIAQFRPEKRHSLILRQYSKFLVNATSIGTPLKNIPTLVFLGSCRTPDDTKTLHDLKQEVDDLELNGYVEFVVDCSYEDIMVWLSKVKFGLNAMWNEHFGIGVVEYMSRGVIPLCHASAGPLLDIVTNWDNEPTSVSWYNNTGFFFKDKSDPDFDLSLQSDTASEFLQFSSRDNKDSTSTYPTLARLLDELFITNPDLISETRLQSMRENGVKSVLEKFSNGVFTLKWMQYSNQLGDLEKSYREERRSGIEKVY.

Position 1 (Met-1) is a topological domain, lumenal. Residues 2-21 (GYLVVIGVIACVAYGILQVV) traverse the membrane as a helical segment. The Cytoplasmic portion of the chain corresponds to 22–199 (STVLPRLLLV…RLIDGDYWKR (178 aa)). The segment at residues 200–220 (FTLIGQLFGSMVLSWEAMFEL) is an intramembrane region (helical). At 221–460 (SPDVWIDTIG…FGLNAMWNEH (240 aa)) the chain is on the cytoplasmic side. The helical intramembrane region spans 461–481 (FGIGVVEYMSRGVIPLCHASA). Residues 482 to 616 (GPLLDIVTNW…ERRSGIEKVY (135 aa)) lie on the Cytoplasmic side of the membrane.

It belongs to the glycosyltransferase group 1 family.

The protein resides in the endoplasmic reticulum membrane. It carries out the reaction an alpha-D-Man-(1-&gt;3)-[alpha-D-Man-(1-&gt;6)]-beta-D-Man-(1-&gt;4)-beta-D-GlcNAc-(1-&gt;4)-alpha-D-GlcNAc-diphospho-di-trans,poly-cis-dolichol + 2 GDP-alpha-D-mannose = an alpha-D-Man-(1-&gt;2)-alpha-D-Man-(1-&gt;2)-alpha-D-Man-(1-&gt;3)-[alpha-D-Man-(1-&gt;6)]-beta-D-Man-(1-&gt;4)-beta-D-GlcNAc-(1-&gt;4)-alpha-D-GlcNAc-diphospho-di-trans,poly-cis-dolichol + 2 GDP + 2 H(+). It functions in the pathway protein modification; protein glycosylation. In terms of biological role, GDP-Man:Man(3)GlcNAc(2)-PP-Dol alpha-1,2-mannosyltransferase that operates in the biosynthetic pathway of dolichol-linked oligosaccharides, the glycan precursors employed in protein asparagine (N)-glycosylation. The assembly of dolichol-linked oligosaccharides begins on the cytosolic side of the endoplasmic reticulum membrane and finishes in its lumen. The sequential addition of sugars to dolichol pyrophosphate produces dolichol-linked oligosaccharides containing fourteen sugars, including two GlcNAcs, nine mannoses and three glucoses. Once assembled, the oligosaccharide is transferred from the lipid to nascent proteins by oligosaccharyltransferases. Catalyzes, on the cytoplasmic face of the endoplasmic reticulum, the addition of the fourth and fifth mannose residues to the dolichol-linked oligosaccharide chain, to produce Man(5)GlcNAc(2)-PP-dolichol core oligosaccharide. The sequence is that of GDP-Man:Man(3)GlcNAc(2)-PP-Dol alpha-1,2-mannosyltransferase (ALG11) from Debaryomyces hansenii (strain ATCC 36239 / CBS 767 / BCRC 21394 / JCM 1990 / NBRC 0083 / IGC 2968) (Yeast).